A 312-amino-acid chain; its full sequence is uncharacterized protein (312 aa).

Disordered stretches follow at residues 1 to 26 (MQKD…AMVA) and 45 to 106 (GNLQ…LPSG). The segment covering 8–17 (RFQRNKKKIN) has biased composition (basic residues). The segment covering 68–77 (NGKRNGDKVR) has biased composition (basic and acidic residues). The span at 85-103 (GHSSYAGSRISGGNSNSHL) shows a compositional bias: polar residues.

This is an uncharacterized protein from Schizosaccharomyces pombe (strain 972 / ATCC 24843) (Fission yeast).